The primary structure comprises 1103 residues: Centrosomal protein of 126 kDa (1103 aa).

The span at 1–12 (MLAGRPGAQSAG) shows a compositional bias: low complexity. The interval 1 to 36 (MLAGRPGAQSAGAGVGAGPPDAPGARDGGGRPRPGA) is disordered. Coiled-coil stretches lie at residues 43 to 116 (HLEK…FQRA) and 182 to 222 (QKHL…KLLE). Disordered stretches follow at residues 380 to 409 (NTAE…ESPT) and 723 to 812 (ESKA…PGQS). Residues 723–735 (ESKAPVHASDSKT) show a composition bias toward basic and acidic residues. Over residues 736 to 748 (QKTKPQRGVKFTR) the composition is skewed to basic residues. Polar residues-rich tracts occupy residues 763-784 (RKPT…QTQG) and 798-812 (NIKS…PGQS).

Interacts with DCTN1.

Its subcellular location is the midbody. The protein resides in the cytoplasm. It localises to the cytoskeleton. The protein localises to the microtubule organizing center. It is found in the centrosome. Its subcellular location is the cilium basal body. Functionally, participate in cytokinesis. Necessary for microtubules and mitotic spindle organization. Involved in primary cilium formation. The polypeptide is Centrosomal protein of 126 kDa (Mus musculus (Mouse)).